A 455-amino-acid polypeptide reads, in one-letter code: Beta-1,3-galactosyl-O-glycosyl-glycoprotein beta-1,6-N-acetylglucosaminyltransferase 4 (455 aa).

The Cytoplasmic segment spans residues Met-1–Gln-13. Residues Gln-14–Val-34 form a helical; Signal-anchor for type II membrane protein membrane-spanning segment. Residues Gly-35–Leu-455 lie on the Lumenal side of the membrane. N-linked (GlcNAc...) asparagine glycosylation is present at Asn-73. 4 disulfides stabilise this stretch: Cys-74-Cys-228, Cys-162-Cys-383, Cys-183-Cys-210, and Cys-392-Cys-424. Asn-287 and Asn-382 each carry an N-linked (GlcNAc...) asparagine glycan.

This sequence belongs to the glycosyltransferase 14 family.

Its subcellular location is the golgi apparatus membrane. It catalyses the reaction a 3-O-[beta-D-galactosyl-(1-&gt;3)-N-acetyl-alpha-D-galactosaminyl]-L-seryl-[protein] + UDP-N-acetyl-alpha-D-glucosamine = 3-O-{beta-D-galactosyl-(1-&gt;3)-[N-acetyl-beta-D-glucosaminyl-(1-&gt;6)]-N-acetyl-alpha-D-galactosaminyl}-L-seryl-[protein] + UDP + H(+). It carries out the reaction a 3-O-[beta-D-galactosyl-(1-&gt;3)-N-acetyl-alpha-D-galactosaminyl]-L-threonyl-[protein] + UDP-N-acetyl-alpha-D-glucosamine = a 3-O-{beta-D-galactosyl-(1-&gt;3)-[N-acetyl-beta-D-glucosaminyl-(1-&gt;6)]-N-acetyl-alpha-D-galactosaminyl}-L-threonyl-[protein] + UDP + H(+). It functions in the pathway protein modification; protein glycosylation. Its function is as follows. Glycosyltransferase that mediates core 2 O-glycan branching, an important step in mucin-type biosynthesis. Does not have core 4 O-glycan or I-branching enzyme activity. This is Beta-1,3-galactosyl-O-glycosyl-glycoprotein beta-1,6-N-acetylglucosaminyltransferase 4 (Gcnt4) from Mus musculus (Mouse).